The chain runs to 186 residues: Ribosome maturation factor RimP (186 aa).

Belongs to the RimP family.

It is found in the cytoplasm. Its function is as follows. Required for maturation of 30S ribosomal subunits. The protein is Ribosome maturation factor RimP of Novosphingobium aromaticivorans (strain ATCC 700278 / DSM 12444 / CCUG 56034 / CIP 105152 / NBRC 16084 / F199).